The chain runs to 239 residues: Prolactin-8A4 (239 aa).

An N-terminal signal peptide occupies residues 1-31 (MMKLALSQPPFSGTLLMLVVSILLLWEKAAS). 2 disulfide bridges follow: cysteine 35–cysteine 42 and cysteine 102–cysteine 215. 2 N-linked (GlcNAc...) asparagine glycosylation sites follow: asparagine 211 and asparagine 218. A disulfide bridge connects residues cysteine 232 and cysteine 239.

The protein belongs to the somatotropin/prolactin family. Placental basal zone cells.

It localises to the secreted. The protein is Prolactin-8A4 (Prl8a4) of Rattus norvegicus (Rat).